A 73-amino-acid chain; its full sequence is Large ribosomal subunit protein bL31 (73 aa).

Residues C16, C18, C38, and C41 each coordinate Zn(2+).

The protein belongs to the bacterial ribosomal protein bL31 family. Type A subfamily. Part of the 50S ribosomal subunit. Requires Zn(2+) as cofactor.

Functionally, binds the 23S rRNA. In Vibrio parahaemolyticus serotype O3:K6 (strain RIMD 2210633), this protein is Large ribosomal subunit protein bL31.